We begin with the raw amino-acid sequence, 1227 residues long: DNA-directed RNA polymerase subunit beta (1227 aa).

Belongs to the RNA polymerase beta chain family. As to quaternary structure, the RNAP catalytic core consists of 2 alpha, 1 beta, 1 beta' and 1 omega subunit. When a sigma factor is associated with the core the holoenzyme is formed, which can initiate transcription.

The enzyme catalyses RNA(n) + a ribonucleoside 5'-triphosphate = RNA(n+1) + diphosphate. DNA-dependent RNA polymerase catalyzes the transcription of DNA into RNA using the four ribonucleoside triphosphates as substrates. The sequence is that of DNA-directed RNA polymerase subunit beta from Chloroflexus aurantiacus (strain ATCC 29366 / DSM 635 / J-10-fl).